The following is a 97-amino-acid chain: UPF0235 protein AZOSEA09540 (97 aa).

The protein belongs to the UPF0235 family.

The sequence is that of UPF0235 protein AZOSEA09540 from Aromatoleum aromaticum (strain DSM 19018 / LMG 30748 / EbN1) (Azoarcus sp. (strain EbN1)).